The sequence spans 681 residues: MTDTVVNRWMYPGDGPLQSNDKEQLQAGWSVHPGAQTDRQRKQEELTDEEKEIINRVIARAEKMEAMEQERIGRLVDRLETMRKNVAGDGVNRCILCGEQLGMLGSACVVCEDCKKNVCTKCGVETSNNRPHPVWLCKICLEQREVWKRSGAWFFKGFPKQVLPQPMPIKKTKPQQPAGEPATQEQPTPESRHPARAPARGDMEDRRPPGQKPGPDLTSAPGRGSHGPPTRRASEARMSTAARDSEGWDHAHGGGTGDTSRSPAGLRRANSVQAARPAPAPVPSPAPPQPVQPGPPGGSRATPGPGRFPEQSTEAPPSDPGYPGAVAPAREERTGPAGGFQAAPHTAAPYSQAAPARQPPPAEEEEEEANSYDSDEATTLGALEFSLLYDQDNSNLQCTIIRAKGLKPMDSNGLADPYVKLHLLPGASKSNKLRTKTLRNTRNPVWNETLQYHGITEEDMQRKTLRISVCDEDKFGHNEFIGETRFSLKKLKANQRKNFNICLERVIPMKRAGTTGSARGMALYEEEQVERIGDIEERGKILVSLMYSTQQGGLIVGIIRCVHLAAMDANGYSDPFVKLWLKPDMGKKAKHKTQIKKKTLNPEFNEEFFYDIKHSDLAKKSLDISVWDYDIGKSNDYIGGCQLGISAKGERLKHWYECLKNKDKKIERWHQLQNENHVSSD.

The segment at 1-21 (MTDTVVNRWMYPGDGPLQSND) is disordered. A RabBD domain is found at 40 to 157 (QRKQEELTDE…KRSGAWFFKG (118 aa)). The FYVE-type zinc finger occupies 88 to 145 (GDGVNRCILCGEQLGMLGSACVVCEDCKKNVCTKCGVETSNNRPHPVWLCKICLEQRE). Residues Cys-94, Cys-97, Cys-111, Cys-114, Cys-119, Cys-122, Cys-137, and Cys-140 each coordinate Zn(2+). The interval 162-375 (VLPQPMPIKK…EEEANSYDSD (214 aa)) is disordered. The span at 199–208 (ARGDMEDRRP) shows a compositional bias: basic and acidic residues. Arg-223 is modified (omega-N-methylarginine). The span at 243–252 (RDSEGWDHAH) shows a compositional bias: basic and acidic residues. Residue Ser-271 is modified to Phosphoserine. Over residues 278 to 296 (APAPVPSPAPPQPVQPGPP) the composition is skewed to pro residues. The span at 347–356 (AAPYSQAAPA) shows a compositional bias: low complexity. The segment covering 362–375 (AEEEEEEANSYDSD) has biased composition (acidic residues). The region spanning 379–501 (TLGALEFSLL…KANQRKNFNI (123 aa)) is the C2 1 domain. Ca(2+) contacts are provided by Met-409, Asp-410, Asp-416, Asp-471, Glu-472, Asp-473, Glu-479, Glu-526, Asp-568, Asp-574, Asp-628, Tyr-629, Asp-630, and Asp-636. One can recognise a C2 2 domain in the interval 537-670 (ERGKILVSLM…NKDKKIERWH (134 aa)). 2 positions are modified to phosphoserine: Ser-679 and Ser-680.

Interacts with RAB3B, RAB3C, RAB3D, RAB8A, RAB27A and RAB27B. Interacts with RAB3A; this interaction recruits RPH3A to synaptic vesicules. Interacts (via C2B domain) with SNAP25. Interacts with deubiquitinating enzyme CAND1; this interaction results in the deubiquitination of RPH3A. Interacts with GRIN2A and DLG4; this ternary complex regulates NMDA receptor composition at postsynaptic membranes. Interacts with SNCA. Ca(2+) serves as cofactor. Ubiquitinated. Deubiquitinated by CAND1 to prevent its degradation. As to expression, specifically expressed in brain.

Its subcellular location is the cytoplasmic vesicle. The protein resides in the secretory vesicle. The protein localises to the synaptic vesicle membrane. It localises to the cell projection. It is found in the dendritic spine. Its subcellular location is the postsynaptic cell membrane. The protein resides in the membrane. Plays an essential role in docking and fusion steps of regulated exocytosis. At the presynaptic level, RPH3A is recruited by RAB3A to the synaptic vesicle membrane in a GTP-dependent manner where it modulates synaptic vesicle trafficking and calcium-triggered neurotransmitter release. In the post-synaptic compartment, forms a ternary complex with GRIN2A and DLG4 and regulates NMDA receptor stability. Also plays a role in the exocytosis of arginine vasopressin hormone. This Mus musculus (Mouse) protein is Rabphilin-3A (Rph3a).